The sequence spans 483 residues: ATP-dependent RNA helicase DDX25 (483 aa).

The Nuclear export signal signature appears at 61–74 (LAANSLLNKLIHQS). A Q motif motif is present at residues 97-125 (KTFEELRLKEELLKGIYAMGFNRPSKIQE). Positions 100–114 (EELRLKEELLKGIYA) match the Nuclear localization signal motif. In terms of domain architecture, Helicase ATP-binding spans 130-300 (MMLAHPPQNL…ERIIPDPNVI (171 aa)). 143–150 (SQSGTGKT) lines the ATP pocket. The DEAD box signature appears at 247–250 (DEAD). The Helicase C-terminal domain maps to 311–478 (NIRQYYVLCE…QLNAEDMDEI (168 aa)).

This sequence belongs to the DEAD box helicase family. In terms of processing, phosphorylated on threonine residues. The phosphorylated form is found in the cytoplasm but not in the nucleus. In terms of tissue distribution, highly expressed in the Leydig and germ cells of the testis and weakly expressed in the pituitary and hypothalamus.

The protein localises to the cytoplasm. Its subcellular location is the nucleus. It catalyses the reaction ATP + H2O = ADP + phosphate + H(+). In terms of biological role, ATP-dependent RNA helicase. Required for mRNA export and translation regulation during spermatid development. The sequence is that of ATP-dependent RNA helicase DDX25 (DDX25) from Homo sapiens (Human).